Reading from the N-terminus, the 903-residue chain is Zinc finger CCCH domain-containing protein 27 (903 aa).

A disordered region spans residues 1-144 (MIKESSSPAL…GRNGAPWAQH (144 aa)). Residues 11 to 24 (DADKIEVPSPKDEN) show a composition bias toward basic and acidic residues. Positions 33–46 (TDNEDFEISDDDDD) are enriched in acidic residues. Residues 86 to 96 (SHGEAQKDFFP) are compositionally biased toward basic and acidic residues. The segment at 225-253 (GMPRQRCRDFEERGFCLRGDMCPMEHGLN) adopts a C3H1-type zinc-finger fold. The tract at residues 390–456 (ASKKLGHGKT…GRQSNRASHK (67 aa)) is disordered. Over residues 397–410 (GKTANATSTSATGN) the composition is skewed to low complexity. The span at 432–441 (KDSNGQSNSR) shows a compositional bias: polar residues. One can recognise an RRM domain in the interval 459–531 (RTLYVNGIPL…RFIKLWWANR (73 aa)). Disordered stretches follow at residues 545–609 (KSSH…DTKR), 642–720 (KQKG…QTSP), and 826–903 (TNHS…DVSQ). Residues 556–576 (SVPQPSSSNRGKENLQSATPR) are compositionally biased toward polar residues. Positions 577-587 (ASSGSSAEASG) are enriched in low complexity. The stretch at 608–649 (KRQESLELLEELRKKQEILAQKRDEFRRQLEKLAKQKGLANS) forms a coiled coil. Low complexity predominate over residues 693-708 (SGELASSSHKSSATSA). A compositionally biased stretch (polar residues) spans 826-886 (TNHSRFQKTS…SMPTATSAKT (61 aa)).

The polypeptide is Zinc finger CCCH domain-containing protein 27 (Oryza sativa subsp. japonica (Rice)).